The primary structure comprises 193 residues: Thymidine kinase (193 aa).

ATP is bound by residues 9–16 (ASMNAGKS) and 87–90 (DEAQ). Catalysis depends on E88, which acts as the Proton acceptor. The Zn(2+) site is built by C145, C147, C182, and H185.

The protein belongs to the thymidine kinase family. In terms of assembly, homotetramer.

The protein resides in the cytoplasm. The enzyme catalyses thymidine + ATP = dTMP + ADP + H(+). In Zymomonas mobilis subsp. mobilis (strain ATCC 31821 / ZM4 / CP4), this protein is Thymidine kinase.